Reading from the N-terminus, the 202-residue chain is Nuclear transcription factor Y subunit C-6 (202 aa).

The span at Met1 to Asn16 shows a compositional bias: low complexity. Disordered regions lie at residues Met1–Met29 and Ala180–Asn202. Over residues His17 to Met29 the composition is skewed to polar residues.

This sequence belongs to the NFYC/HAP5 subunit family. Heterotrimeric transcription factor composed of three components, NF-YA, NF-YB and NF-YC. NF-YB and NF-YC must interact and dimerize for NF-YA association and DNA binding. As to expression, expressed in flowers and siliques.

It localises to the nucleus. Stimulates the transcription of various genes by recognizing and binding to a CCAAT motif in promoters. The sequence is that of Nuclear transcription factor Y subunit C-6 (NFYC6) from Arabidopsis thaliana (Mouse-ear cress).